We begin with the raw amino-acid sequence, 536 residues long: CRISPR-associated DNA-binding protein Cas12m (536 aa).

The tract at residues 1 to 59 (MPFGKKARHVKAYQFGADAPQEGMEAVLEQHRLRTDYYNALVEMELRQREERTALLANL) is recognition domain (REC1-N). Residues 60 to 105 (AAESGLESPNQVYERLKAAGEKGIRKHPEYVAARERQKALYGHPRL) form a recognition domain (REC2) region. The recognition domain (REC1-C) stretch occupies residues 106 to 159 (LELQSRQREERNALRRSFGAKGLYSSNYLDVERAFDKARQSPELRFRRYSPHEG). Positions 160–257 (RLAVLYTEGL…RWTVSVVVEV (98 aa)) are wedge domain (WED). The segment at 258-270 (EGPPVASPTGRGA) is linker. The tract at residues 271 to 481 (VAVDLGWRRV…QRGKPVRKLN (211 aa)) is ruvC-I. The segment at 482–516 (PAHTTTDCHACGGALVGDPAKELRLYCPTCERFYD) is target nucleic-acid binding (TNB). Zn(2+) contacts are provided by Cys-489, Cys-492, Cys-508, and Cys-511. Positions 517 to 536 (QDENAARNLLRRAQEVQAQV) are ruvC-II. Position 518 (Asp-518) interacts with Mg(2+).

Belongs to the CRISPR-associated DNA-binding protein Cas12m family. The cofactor is Mg(2+). It depends on Zn(2+) as a cofactor.

Pre-crRNA processing is inhibited by EDTA. Functionally, CRISPR (clustered regularly interspaced short palindromic repeat), is an adaptive immune system that provides protection against mobile genetic elements (viruses, transposable elements and conjugative plasmids). CRISPR clusters contain sequences complementary to antecedent mobile elements and target invading nucleic acids. CRISPR clusters are transcribed and processed into CRISPR RNA (crRNA). Recognizes a short motif in the CRISPR repeat sequences (the 5' PAM or protospacer adjacent motif, 5'-TT/CN-3' in this organism) to help distinguish self versus nonself, as targets within the bacterial CRISPR locus do not have PAMs. Cas12m-crRNA binds DNA in a PAM-dependent, crRNA-guided fashion. DNA-binding probably inhibits transcription, leading to gene silencing. No dsDNA, ssDNA or RNA nuclease activity is seen for the crRNA-Cas12m complex. Upon expression in E.coli as a CRISPR region preferentially binds to its associated crRNA. Is required to process pre-crRNA to mature crRNA without a tracrRNA; processing is Mg(2+)-dependent and does not require the predicted RuvC domain catalytic site. This Allomeiothermus silvanus (strain ATCC 700542 / DSM 9946 / NBRC 106475 / NCIMB 13440 / VI-R2) (Thermus silvanus) protein is CRISPR-associated DNA-binding protein Cas12m.